The primary structure comprises 253 residues: 5'/3'-nucleotidase SurE (253 aa).

4 residues coordinate a divalent metal cation: Asp-8, Asp-9, Ser-39, and Asn-92.

It belongs to the SurE nucleotidase family. Requires a divalent metal cation as cofactor.

It is found in the cytoplasm. The enzyme catalyses a ribonucleoside 5'-phosphate + H2O = a ribonucleoside + phosphate. It catalyses the reaction a ribonucleoside 3'-phosphate + H2O = a ribonucleoside + phosphate. It carries out the reaction [phosphate](n) + H2O = [phosphate](n-1) + phosphate + H(+). In terms of biological role, nucleotidase with a broad substrate specificity as it can dephosphorylate various ribo- and deoxyribonucleoside 5'-monophosphates and ribonucleoside 3'-monophosphates with highest affinity to 3'-AMP. Also hydrolyzes polyphosphate (exopolyphosphatase activity) with the preference for short-chain-length substrates (P20-25). Might be involved in the regulation of dNTP and NTP pools, and in the turnover of 3'-mononucleotides produced by numerous intracellular RNases (T1, T2, and F) during the degradation of various RNAs. In Citrobacter koseri (strain ATCC BAA-895 / CDC 4225-83 / SGSC4696), this protein is 5'/3'-nucleotidase SurE.